Reading from the N-terminus, the 39-residue chain is Photosystem II reaction center protein L (39 aa).

A helical membrane pass occupies residues 18–38 (SLYLGLLLVFVTGVLFSSYFF).

The protein belongs to the PsbL family. PSII is composed of 1 copy each of membrane proteins PsbA, PsbB, PsbC, PsbD, PsbE, PsbF, PsbH, PsbI, PsbJ, PsbK, PsbL, PsbM, PsbT, PsbX, PsbY, PsbZ, Psb30/Ycf12, at least 3 peripheral proteins of the oxygen-evolving complex and a large number of cofactors. It forms dimeric complexes.

Its subcellular location is the plastid. It is found in the organellar chromatophore thylakoid membrane. One of the components of the core complex of photosystem II (PSII). PSII is a light-driven water:plastoquinone oxidoreductase that uses light energy to abstract electrons from H(2)O, generating O(2) and a proton gradient subsequently used for ATP formation. It consists of a core antenna complex that captures photons, and an electron transfer chain that converts photonic excitation into a charge separation. This subunit is found at the monomer-monomer interface and is required for correct PSII assembly and/or dimerization. The chain is Photosystem II reaction center protein L from Paulinella chromatophora.